We begin with the raw amino-acid sequence, 218 residues long: Pyrrolidone-carboxylate peptidase 2 (218 aa).

Active-site residues include E83, C146, and H170.

Belongs to the peptidase C15 family. Homotetramer.

The protein localises to the cytoplasm. The catalysed reaction is Release of an N-terminal pyroglutamyl group from a polypeptide, the second amino acid generally not being Pro.. In terms of biological role, removes 5-oxoproline from various penultimate amino acid residues except L-proline. In Photorhabdus laumondii subsp. laumondii (strain DSM 15139 / CIP 105565 / TT01) (Photorhabdus luminescens subsp. laumondii), this protein is Pyrrolidone-carboxylate peptidase 2.